The primary structure comprises 323 residues: Ankyrin repeat and SOCS box protein 11 (323 aa).

6 ANK repeats span residues 64–93, 97–126, 130–159, 162–191, 195–224, and 227–256; these read ADRSPLHEAAAQGRLLALKTLIAQGVNVNL, NRVSSLHEACLGGHVACAKALLENGAHVNG, HGATPLFNACCSGSAACVNVLLEFGAKAQF, HLASPIHEAVKRGHRECMEILLANNVNIDH, QLGTPLYVACTYQRVDCVKKLLELGASVDH, and WLDTPLHAAARQSNVEVIHLLTDYGANLKR. The region spanning 274 to 323 is the SOCS box domain; it reads VEQALLLCEGPPALSQLCRLCVRKCLGRACHQAIHKLHLPEPLERFLLYQ.

This sequence belongs to the ankyrin SOCS box (ASB) family. As to quaternary structure, substrate-recognition component of the ECS(ASB11) complex, composed of ASB11, CUL5, ELOB, ELOC and RNF7/RBX2.

The protein resides in the endoplasmic reticulum. It participates in protein modification; protein ubiquitination. In terms of biological role, substrate-recognition component of a cullin-5-RING E3 ubiquitin-protein ligase complex (ECS complex, also named CRL5 complex), which mediates the ubiquitination and subsequent proteasomal degradation of target proteins, such as BIK, DIRAS2 and RPN1. The ECS(ASB11) complex acts as a regulator of the endoplasmic reticulum unfolded protein response by mediating ubiquitination and degradation of BIK. This is Ankyrin repeat and SOCS box protein 11 (ASB11) from Pongo abelii (Sumatran orangutan).